The chain runs to 210 residues: NAD(P)H-quinone oxidoreductase subunit I (210 aa).

2 4Fe-4S ferredoxin-type domains span residues Gly54 to Ala83 and Tyr94 to Asp123. Residues Cys63, Cys66, Cys69, Cys73, Cys103, Cys106, Cys109, and Cys113 each contribute to the [4Fe-4S] cluster site.

Belongs to the complex I 23 kDa subunit family. NDH-1 is composed of at least 11 different subunits. The cofactor is [4Fe-4S] cluster.

The protein resides in the cellular thylakoid membrane. It carries out the reaction a plastoquinone + NADH + (n+1) H(+)(in) = a plastoquinol + NAD(+) + n H(+)(out). The catalysed reaction is a plastoquinone + NADPH + (n+1) H(+)(in) = a plastoquinol + NADP(+) + n H(+)(out). Functionally, NDH-1 shuttles electrons from an unknown electron donor, via FMN and iron-sulfur (Fe-S) centers, to quinones in the respiratory and/or the photosynthetic chain. The immediate electron acceptor for the enzyme in this species is believed to be plastoquinone. Couples the redox reaction to proton translocation, and thus conserves the redox energy in a proton gradient. The chain is NAD(P)H-quinone oxidoreductase subunit I from Synechococcus sp. (strain JA-2-3B'a(2-13)) (Cyanobacteria bacterium Yellowstone B-Prime).